Reading from the N-terminus, the 166-residue chain is uncharacterized protein (166 aa).

This is an uncharacterized protein from Orgyia pseudotsugata (Douglas-fir tussock moth).